The following is a 174-amino-acid chain: Actin-related protein 2/3 complex subunit 3 (174 aa).

Belongs to the ARPC3 family. Component of the Arp2/3 complex composed of arpB/Arp2, arpC/Arp3, arcA/p41-arc, arcB/p34-arc, arcC/p21-arc, arcD/p20-arc and arcE/p16-arc. Interacts with carmil (via the region between the LRR domain and COOH-terminal proline-rich domain); carmil is required for Arp2/3-dependent actin nucleation. Arp2/3 complex, MyoB, MyoC, and the alpha and beta subunits of capping protein all form a larger complex with carmil.

Its subcellular location is the cytoplasm. The protein localises to the cytoskeleton. It localises to the cytosol. The protein resides in the cell cortex. It is found in the cell projection. Its subcellular location is the pseudopodium. Functionally, functions as a component of the Arp2/3 complex which is involved in regulation of actin polymerization and together with an activating nucleation-promoting factor (NPF) mediates the formation of branched actin networks. Seems to contact the pointed end of the daughter actin filament. The Arp2/3 complex is involved in organizing the actin system in cell motility and chemotaxis, in phagocytosis and macropinocytosis, at late steps of endosome processing, and in mitosis. In concert with a group of other proteins, the Arp2/3 complex plays a general role in the rapid activation and adaptation of the actin system to its multiple functions. The chain is Actin-related protein 2/3 complex subunit 3 (arcC) from Dictyostelium discoideum (Social amoeba).